The following is a 375-amino-acid chain: Erythronate-4-phosphate dehydrogenase (375 aa).

S45 and T66 together coordinate substrate. NAD(+) contacts are provided by D146 and T175. The active site involves R208. D232 is a binding site for NAD(+). E237 is a catalytic residue. Residue H254 is the Proton donor of the active site. G257 lines the NAD(+) pocket. Y258 contributes to the substrate binding site.

This sequence belongs to the D-isomer specific 2-hydroxyacid dehydrogenase family. PdxB subfamily. Homodimer.

It localises to the cytoplasm. The enzyme catalyses 4-phospho-D-erythronate + NAD(+) = (R)-3-hydroxy-2-oxo-4-phosphooxybutanoate + NADH + H(+). It functions in the pathway cofactor biosynthesis; pyridoxine 5'-phosphate biosynthesis; pyridoxine 5'-phosphate from D-erythrose 4-phosphate: step 2/5. Functionally, catalyzes the oxidation of erythronate-4-phosphate to 3-hydroxy-2-oxo-4-phosphonooxybutanoate. This chain is Erythronate-4-phosphate dehydrogenase, found in Edwardsiella ictaluri (strain 93-146).